A 430-amino-acid chain; its full sequence is uncharacterized protein (430 aa).

12 helical membrane passes run 36-56 (LFVVSISQIFGGAGLAAGVTV), 69-89 (AFAGLPSALFTLGSAGSALIV), 100-122 (TGLSAGFMIGGLGAIGVIMAAII), 126-148 (FLLFISLLIYGAGTATNLQARYA), 160-180 (TAVSITMVFTTFGAVAGPSLV), 197-217 (GPFILAAAAYMLAGVVLFIML), 253-273 (IIVGATVMVLTQIVMVAIMTM), 285-305 (LGAVGLVIGFHIGAMYLPSLV), 317-337 (AMAISSGTTLLLAGVIAAFAP), 340-360 (SMILLVIALSLLGLGWNFGLI), 384-404 (VLIALSGAAGGALSGMIVAGS), and 406-426 (YLALSLIGGILSLLLIPVVVW).

This sequence belongs to the major facilitator superfamily.

The protein resides in the cell membrane. This is an uncharacterized protein from Bacillus subtilis (strain 168).